The primary structure comprises 147 residues: Transcriptional regulator MraZ (147 aa).

2 SpoVT-AbrB domains span residues 5 to 52 (NHPT…PMEE) and 81 to 124 (GQVV…NAEH).

It belongs to the MraZ family. As to quaternary structure, forms oligomers.

It localises to the cytoplasm. The protein localises to the nucleoid. The polypeptide is Transcriptional regulator MraZ (Koribacter versatilis (strain Ellin345)).